The sequence spans 134 residues: UPF0412 protein YaaI (134 aa).

Residues 1 to 23 form the signal peptide; it reads MKSVFTISASLAISLMLCCTAQA.

Belongs to the UPF0412 family.

This chain is UPF0412 protein YaaI, found in Escherichia coli O157:H7.